Reading from the N-terminus, the 330-residue chain is DNA-binding death effector domain-containing protein 2 (330 aa).

Positions 25–104 (SLHRMFEVVG…RHDLLPHLAR (80 aa)) constitute a DED domain. The Nuclear localization signal signature appears at 104-109 (RKRRRP). Residues 104–195 (RKRRRPVSPE…HQELGRPSSE (92 aa)) form a disordered region. The span at 137–147 (ASSSSDSPQSQ) shows a compositional bias: low complexity. Positions 156–174 (KRQRRSRGRPSSGARQRRR) match the Bipartite nuclear localization signal motif.

In terms of assembly, interacts with CASP8, CASP10 and GTF3C3. Homodimerizes and heterodimerizes with DEDD. Expression is high in liver, heart, kidney, and testis but low in brain, spleen, lung, and skeleton muscle.

It is found in the nucleus. It localises to the nucleolus. Its function is as follows. May play a critical role in death receptor-induced apoptosis and may target CASP8 and CASP10 to the nucleus. May regulate degradation of intermediate filaments during apoptosis. May play a role in the general transcription machinery in the nucleus and might be an important regulator of the activity of GTF3C3. This chain is DNA-binding death effector domain-containing protein 2 (Dedd2), found in Mus musculus (Mouse).